The sequence spans 466 residues: Adenosylhomocysteinase (466 aa).

Residues threonine 57, aspartate 132, and glutamate 192 each coordinate substrate. 193 to 195 (TTT) provides a ligand contact to NAD(+). Positions 222 and 226 each coordinate substrate. NAD(+) is bound by residues asparagine 227, 256 to 261 (GYGDVG), glutamate 279, asparagine 314, 335 to 337 (IGH), and asparagine 380.

The protein belongs to the adenosylhomocysteinase family. NAD(+) serves as cofactor.

The protein localises to the cytoplasm. The enzyme catalyses S-adenosyl-L-homocysteine + H2O = L-homocysteine + adenosine. It participates in amino-acid biosynthesis; L-homocysteine biosynthesis; L-homocysteine from S-adenosyl-L-homocysteine: step 1/1. In terms of biological role, may play a key role in the regulation of the intracellular concentration of adenosylhomocysteine. This is Adenosylhomocysteinase from Mesorhizobium japonicum (strain LMG 29417 / CECT 9101 / MAFF 303099) (Mesorhizobium loti (strain MAFF 303099)).